Consider the following 139-residue polypeptide: Large ribosomal subunit protein uL16 (139 aa).

Positions 1-20 (MLIPKRTKYRKQHRPVRRGM) are enriched in basic residues. The segment at 1–21 (MLIPKRTKYRKQHRPVRRGMS) is disordered.

Belongs to the universal ribosomal protein uL16 family. Part of the 50S ribosomal subunit.

Functionally, binds 23S rRNA and is also seen to make contacts with the A and possibly P site tRNAs. The polypeptide is Large ribosomal subunit protein uL16 (Bifidobacterium adolescentis (strain ATCC 15703 / DSM 20083 / NCTC 11814 / E194a)).